The primary structure comprises 304 residues: MEKNFKVAALYCFADLKHYRQLQKPLLDLCQAKDIKGTLLLAQEGINGTIAGSCRAIEELVNFIKTEPAFQTPEIKYSWASKMPFHRMKVRLKKEIVTMGVEGINPLKIVGTYVDPEDWNALIQDEETLLIDTRNDYEYAIGSFQGAIDPGIKTFREFPEWVRKHEADLKKKKKMAMFCTGGIRCEKSTAYVRELGYEQVYHLKGGILKYLETIPKEESLWWGECFVFDERVSVKHGLEECGRELCRACRSPLNAEGKLSPHYEAGVSCDACYNKRSEVDRERFRERHRQIQLSKLRAMHSHQE.

Positions Q124–S219 constitute a Rhodanese domain. The active-site Cysteine persulfide intermediate is C179.

This sequence belongs to the TrhO family.

It carries out the reaction uridine(34) in tRNA + AH2 + O2 = 5-hydroxyuridine(34) in tRNA + A + H2O. Catalyzes oxygen-dependent 5-hydroxyuridine (ho5U) modification at position 34 in tRNAs. This is tRNA uridine(34) hydroxylase from Bartonella quintana (strain Toulouse) (Rochalimaea quintana).